The following is a 929-amino-acid chain: Valine--tRNA ligase (929 aa).

A 'HIGH' region motif is present at residues 40 to 50 (PNVTGHLHMGH). The 'KMSKS' region signature appears at 522-526 (KMSKS). Lys525 contacts ATP. Positions 855–926 (LAGLIDKEAE…LEQQHAEITD (72 aa)) form a coiled coil.

This sequence belongs to the class-I aminoacyl-tRNA synthetase family. ValS type 1 subfamily. In terms of assembly, monomer.

It is found in the cytoplasm. It catalyses the reaction tRNA(Val) + L-valine + ATP = L-valyl-tRNA(Val) + AMP + diphosphate. Functionally, catalyzes the attachment of valine to tRNA(Val). As ValRS can inadvertently accommodate and process structurally similar amino acids such as threonine, to avoid such errors, it has a 'posttransfer' editing activity that hydrolyzes mischarged Thr-tRNA(Val) in a tRNA-dependent manner. The sequence is that of Valine--tRNA ligase from Nitrosococcus oceani (strain ATCC 19707 / BCRC 17464 / JCM 30415 / NCIMB 11848 / C-107).